The chain runs to 93 residues: Putative sodium channel toxin Ts41 (93 aa).

A signal peptide spans 1–23 (MKIGVLFTIISMLCLLEVRKICS). 4 disulfides stabilise this stretch: Cys-22-Cys-87, Cys-39-Cys-62, Cys-48-Cys-67, and Cys-52-Cys-69. Residues 26–88 (EGGYPRYFSF…FWNVYRKYCK (63 aa)) form the LCN-type CS-alpha/beta domain.

Belongs to the long (4 C-C) scorpion toxin superfamily. In terms of tissue distribution, expressed by the venom gland.

It is found in the secreted. Its function is as follows. The edited BmKBTx-like may modulate voltage-gated sodium channels (Nav). In terms of biological role, the non-edited form is able to form a heterodimer. In orthologs, a heterodimer with LVP beta-chain induces lipolysis in rat adipocytes, which is mediated through the beta-2 adrenergic receptor pathway (ADRB2). Since no LVP beta-chains have been identified in the venom of this scorpion, it is possible that this protein is not involved in a lipolysis process. The polypeptide is Putative sodium channel toxin Ts41 (Tityus serrulatus (Brazilian scorpion)).